The sequence spans 339 residues: Ornithine utilization regulator (339 aa).

The region spanning 241-338 (TRVRRLLLAR…GKLPSDYREA (98 aa)) is the HTH araC/xylS-type domain. 2 consecutive DNA-binding regions (H-T-H motif) follow at residues 258–279 (EQAA…SSLG) and 305–328 (LYEI…RKWT).

In terms of biological role, probably activates the ArgJ gene that encodes ornithine acetyltransferase. Binds to its own promoter-operator region. Probably binds ornithine. The polypeptide is Ornithine utilization regulator (oruR) (Pseudomonas aeruginosa (strain ATCC 15692 / DSM 22644 / CIP 104116 / JCM 14847 / LMG 12228 / 1C / PRS 101 / PAO1)).